Reading from the N-terminus, the 425-residue chain is Xylose isomerase (425 aa).

Active-site residues include H101 and D104. Residues E232, E268, H271, D296, D307, D309, and D339 each coordinate Mg(2+).

It belongs to the xylose isomerase family. Homotetramer. It depends on Mg(2+) as a cofactor.

The protein resides in the cytoplasm. The enzyme catalyses alpha-D-xylose = alpha-D-xylulofuranose. The protein is Xylose isomerase of Salmonella paratyphi A (strain ATCC 9150 / SARB42).